The sequence spans 482 residues: uncharacterized protein (482 aa).

Helical transmembrane passes span 40-57 (LDWY…LSFL), 83-103 (AAVS…VLLV), 109-129 (HYYL…TCFV), 140-160 (LLLG…ISMT), 170-190 (LAYL…IATG), 205-225 (WLYI…LFCL), 278-298 (VIQF…PSIL), 311-331 (YMSV…CLLS), 338-358 (GWFI…LLAT), 366-386 (VATY…ITWI), 399-418 (ALGC…GQVY), and 428-448 (GFAL…RFYL).

This sequence belongs to the major facilitator superfamily. Allantoate permease family.

It is found in the endoplasmic reticulum. Its subcellular location is the membrane. This is an uncharacterized protein from Schizosaccharomyces pombe (strain 972 / ATCC 24843) (Fission yeast).